Consider the following 293-residue polypeptide: MKKKLILGLVMMMALFSLAACGGGGDVVKTDSGDVTQDELYDAMKDKYGSEFVQQLTFEKILGDKYKVSDEDVDKKFNEYKSQYGDQFSAVLAQSGLTEKSFKSQLKYNLLVQKATEANTDTSDKTLKKYYETWQPDITVSHILVADENKAKEVEQKLKDGAKFADLAKEYSTDTATKDNGGQLAPFGPGKMDPAFEKAAYALKNKGDISAPVKTQYGYHIIQMDKPATKTTFEKDKKAVKASYLESQLTTENMQKTLKKEYKDANVKVEDKDLKDAFKDFDGSSSSDSDSSK.

The first 20 residues, 1–20 (MKKKLILGLVMMMALFSLAA), serve as a signal peptide directing secretion. A lipid anchor (N-palmitoyl cysteine) is attached at Cys21. A lipid anchor (S-diacylglycerol cysteine) is attached at Cys21. The 92-residue stretch at 135-226 (QPDITVSHIL…YGYHIIQMDK (92 aa)) folds into the PpiC domain.

This sequence belongs to the PrsA family.

It localises to the cell membrane. It carries out the reaction [protein]-peptidylproline (omega=180) = [protein]-peptidylproline (omega=0). Its function is as follows. Plays a major role in protein secretion by helping the post-translocational extracellular folding of several secreted proteins. The sequence is that of Foldase protein PrsA 2 from Listeria monocytogenes serotype 4b (strain F2365).